The primary structure comprises 344 residues: Biotin synthase (344 aa).

Residues 40 to 267 form the Radical SAM core domain; the sequence is AQVQVSTLLS…KSMVRLSAGR (228 aa). Positions 55, 59, and 62 each coordinate [4Fe-4S] cluster. The [2Fe-2S] cluster site is built by C99, C130, C190, and R262.

This sequence belongs to the radical SAM superfamily. Biotin synthase family. Homodimer. [4Fe-4S] cluster is required as a cofactor. It depends on [2Fe-2S] cluster as a cofactor.

The enzyme catalyses (4R,5S)-dethiobiotin + (sulfur carrier)-SH + 2 reduced [2Fe-2S]-[ferredoxin] + 2 S-adenosyl-L-methionine = (sulfur carrier)-H + biotin + 2 5'-deoxyadenosine + 2 L-methionine + 2 oxidized [2Fe-2S]-[ferredoxin]. It functions in the pathway cofactor biosynthesis; biotin biosynthesis; biotin from 7,8-diaminononanoate: step 2/2. In terms of biological role, catalyzes the conversion of dethiobiotin (DTB) to biotin by the insertion of a sulfur atom into dethiobiotin via a radical-based mechanism. This is Biotin synthase from Xanthomonas axonopodis pv. citri (strain 306).